The sequence spans 537 residues: [Pyruvate dehydrogenase [acetyl-transferring]]-phosphatase 1, mitochondrial (537 aa).

Residues 1–71 (MPAPTQLFFP…WWHYTQGRRY (71 aa)) constitute a mitochondrion transit peptide. A PPM-type phosphatase domain is found at 109–525 (ILGFDSNQLP…DDITIIVVQF (417 aa)). Positions 144 and 145 each coordinate Mn(2+). N6-acetyllysine is present on Lys-202. Positions 418 and 516 each coordinate Mn(2+).

The protein belongs to the PP2C family. In terms of assembly, heterodimer of a catalytic (PDP1) and a regulatory (PDPR) subunit. Mn(2+) serves as cofactor. Mg(2+) is required as a cofactor.

Its subcellular location is the mitochondrion. It carries out the reaction O-phospho-L-seryl-[pyruvate dehydrogenase E1 alpha subunit] + H2O = L-seryl-[pyruvate dehydrogenase E1 alpha subunit] + phosphate. With respect to regulation, magnesium-dependent and calcium-stimulated. PDP1 activity strongly depends on its Ca(2+)-dependent binding to the lipoyl domain of E2 subunit of component of the pyruvate dehydrogenase complex. In terms of biological role, mitochondrial enzyme that catalyzes the dephosphorylation and concomitant reactivation of the alpha subunit of the E1 component of the pyruvate dehydrogenase complex (PDC), thereby stimulating the conversion of pyruvate into acetyl-CoA. In Pongo abelii (Sumatran orangutan), this protein is [Pyruvate dehydrogenase [acetyl-transferring]]-phosphatase 1, mitochondrial (PDP1).